Reading from the N-terminus, the 345-residue chain is Phosphoribosylformylglycinamidine cyclo-ligase (345 aa).

Belongs to the AIR synthase family.

The protein localises to the cytoplasm. It catalyses the reaction 2-formamido-N(1)-(5-O-phospho-beta-D-ribosyl)acetamidine + ATP = 5-amino-1-(5-phospho-beta-D-ribosyl)imidazole + ADP + phosphate + H(+). It functions in the pathway purine metabolism; IMP biosynthesis via de novo pathway; 5-amino-1-(5-phospho-D-ribosyl)imidazole from N(2)-formyl-N(1)-(5-phospho-D-ribosyl)glycinamide: step 2/2. In Synechococcus sp. (strain CC9605), this protein is Phosphoribosylformylglycinamidine cyclo-ligase.